Here is a 341-residue protein sequence, read N- to C-terminus: BZIP domain-containing transcription factor BZP4 (341 aa).

Composition is skewed to polar residues over residues 1 to 32 (MESSWPAQSSFSYYNQGSMQTSSRHASSPTNE), 61 to 76 (LTESGGDSLPSFSHSL), 128 to 139 (PLTSHSRSQITH), and 150 to 163 (YSSSPNLHQLSPVS). 2 disordered regions span residues 1–95 (MESS…PHGM) and 118–254 (TNHS…DKKQ). Over residues 178–192 (SPSSSSFPSSIPRTP) the composition is skewed to low complexity. Composition is skewed to basic and acidic residues over residues 225 to 234 (TGDRKHEKDS) and 242 to 254 (EEYKKLNPKDKKQ). Residues 250–269 (KDKKQVRNRIGARRFRAKRK) are basic motif. The region spanning 250 to 308 (KDKKQVRNRIGARRFRAKRKDYVNQLEAGIRLRDDEITNLQSQLESQRNEINELRLQLK) is the bZIP domain. Residues 279 to 307 (IRLRDDEITNLQSQLESQRNEINELRLQL) form a leucine-zipper region.

Belongs to the bZIP family.

The protein resides in the nucleus. It localises to the cytoplasm. In terms of biological role, transcription factor that promotes the production of melanin, a pigment that serves as antioxidant, reactive oxygen species (ROS) scavenger and that protect fungal pathogens from radiation and host immune responses. The protein is BZIP domain-containing transcription factor BZP4 of Cryptococcus neoformans var. grubii serotype A (strain H99 / ATCC 208821 / CBS 10515 / FGSC 9487) (Filobasidiella neoformans var. grubii).